Reading from the N-terminus, the 328-residue chain is Malate dehydrogenase 1 (328 aa).

12-18 (GAAGQIA) contacts NAD(+). Substrate is bound by residues R93 and R99. NAD(+) is bound by residues N106, Q113, and 130-132 (VGN). Positions 132 and 163 each coordinate substrate. The active-site Proton acceptor is H188.

The protein belongs to the LDH/MDH superfamily. MDH type 2 family.

The catalysed reaction is (S)-malate + NAD(+) = oxaloacetate + NADH + H(+). In terms of biological role, catalyzes the reversible oxidation of malate to oxaloacetate. This chain is Malate dehydrogenase 1, found in Burkholderia vietnamiensis (strain G4 / LMG 22486) (Burkholderia cepacia (strain R1808)).